A 452-amino-acid chain; its full sequence is Pup--protein ligase (452 aa).

A Mg(2+)-binding site is contributed by glutamate 9. Position 53 (arginine 53) interacts with ATP. Tyrosine 55 is a Mg(2+) binding site. Aspartate 57 acts as the Proton acceptor in catalysis. Residue glutamate 63 participates in Mg(2+) binding. 2 residues coordinate ATP: threonine 66 and tryptophan 419.

Belongs to the Pup ligase/Pup deamidase family. Pup-conjugating enzyme subfamily.

The catalysed reaction is ATP + [prokaryotic ubiquitin-like protein]-L-glutamate + [protein]-L-lysine = ADP + phosphate + N(6)-([prokaryotic ubiquitin-like protein]-gamma-L-glutamyl)-[protein]-L-lysine.. Its pathway is protein degradation; proteasomal Pup-dependent pathway. It functions in the pathway protein modification; protein pupylation. Catalyzes the covalent attachment of the prokaryotic ubiquitin-like protein modifier Pup to the proteasomal substrate proteins, thereby targeting them for proteasomal degradation. This tagging system is termed pupylation. The ligation reaction involves the side-chain carboxylate of the C-terminal glutamate of Pup and the side-chain amino group of a substrate lysine. This Actinosynnema mirum (strain ATCC 29888 / DSM 43827 / JCM 3225 / NBRC 14064 / NCIMB 13271 / NRRL B-12336 / IMRU 3971 / 101) protein is Pup--protein ligase.